The following is a 217-amino-acid chain: MKIILLGPPGAGKGTQAKFISEEYSIPHISTGDIFRKNISDKTPLGIEAKEYLDKGQLVPDEVTINIVKDRLSEDDCESGFLLDGFPRTVYQAEALDSFLNANDNKIDMVLLIDVPRELIFDRMTGRRICPSCGASYHVKFNPPKLKDKCDICNNDIIQRKDDTESTVKDRLDVYEKQTEPLINYYKKQGVISTIEGSGEINQVFQRAKSALGAVCK.

Residue 10 to 15 coordinates ATP; that stretch reads GAGKGT. An NMP region spans residues 30 to 59; that stretch reads STGDIFRKNISDKTPLGIEAKEYLDKGQLV. AMP contacts are provided by residues threonine 31, arginine 36, 57–59, 85–88, and glutamine 92; these read QLV and GFPR. The LID stretch occupies residues 126-163; that stretch reads GRRICPSCGASYHVKFNPPKLKDKCDICNNDIIQRKDD. Arginine 127 contacts ATP. Positions 130 and 133 each coordinate Zn(2+). 136–137 lines the ATP pocket; it reads SY. Cysteine 150 and cysteine 153 together coordinate Zn(2+). The AMP site is built by arginine 160 and arginine 171. Glycine 199 is a binding site for ATP.

It belongs to the adenylate kinase family. Monomer.

The protein localises to the cytoplasm. The catalysed reaction is AMP + ATP = 2 ADP. It functions in the pathway purine metabolism; AMP biosynthesis via salvage pathway; AMP from ADP: step 1/1. Catalyzes the reversible transfer of the terminal phosphate group between ATP and AMP. Plays an important role in cellular energy homeostasis and in adenine nucleotide metabolism. This chain is Adenylate kinase, found in Clostridium kluyveri (strain NBRC 12016).